A 292-amino-acid chain; its full sequence is Ribosomal protein L11 methyltransferase (292 aa).

S-adenosyl-L-methionine contacts are provided by T136, G159, D181, and N228.

Belongs to the methyltransferase superfamily. PrmA family.

The protein localises to the cytoplasm. It carries out the reaction L-lysyl-[protein] + 3 S-adenosyl-L-methionine = N(6),N(6),N(6)-trimethyl-L-lysyl-[protein] + 3 S-adenosyl-L-homocysteine + 3 H(+). Its function is as follows. Methylates ribosomal protein L11. In Rhizobium leguminosarum bv. trifolii (strain WSM2304), this protein is Ribosomal protein L11 methyltransferase.